The sequence spans 129 residues: Small ribosomal subunit protein uS12 (129 aa).

Disordered regions lie at residues 1 to 25 (MPTYNQLVRFGRKSKTRKTKSPALE) and 110 to 129 (RKQGRSRYGAPRKQVAVTKK). Residues 10-20 (FGRKSKTRKTK) show a composition bias toward basic residues.

The protein belongs to the universal ribosomal protein uS12 family. Part of the 30S ribosomal subunit. Contacts proteins S8 and S17. May interact with IF1 in the 30S initiation complex.

Its function is as follows. With S4 and S5 plays an important role in translational accuracy. Interacts with and stabilizes bases of the 16S rRNA that are involved in tRNA selection in the A site and with the mRNA backbone. Located at the interface of the 30S and 50S subunits, it traverses the body of the 30S subunit contacting proteins on the other side and probably holding the rRNA structure together. The combined cluster of proteins S8, S12 and S17 appears to hold together the shoulder and platform of the 30S subunit. This is Small ribosomal subunit protein uS12 from Rickettsia conorii (strain ATCC VR-613 / Malish 7).